The following is a 423-amino-acid chain: Gamma-glutamyl phosphate reductase (423 aa).

The protein belongs to the gamma-glutamyl phosphate reductase family.

It is found in the cytoplasm. The catalysed reaction is L-glutamate 5-semialdehyde + phosphate + NADP(+) = L-glutamyl 5-phosphate + NADPH + H(+). Its pathway is amino-acid biosynthesis; L-proline biosynthesis; L-glutamate 5-semialdehyde from L-glutamate: step 2/2. Functionally, catalyzes the NADPH-dependent reduction of L-glutamate 5-phosphate into L-glutamate 5-semialdehyde and phosphate. The product spontaneously undergoes cyclization to form 1-pyrroline-5-carboxylate. In Paraburkholderia xenovorans (strain LB400), this protein is Gamma-glutamyl phosphate reductase.